Here is a 92-residue protein sequence, read N- to C-terminus: Non-specific lipid-transfer protein 2 (92 aa).

Intrachain disulfides connect Cys4/Cys52, Cys14/Cys28, Cys29/Cys74, and Cys50/Cys88.

The protein belongs to the plant LTP family. As to expression, expressed in seeds and, at very low levels, in pulp of fruit (at protein level).

Functionally, plant non-specific lipid-transfer proteins transfer phospholipids as well as galactolipids across membranes. May play a role in wax or cutin deposition in the cell walls of expanding epidermal cells and certain secretory tissues. This is Non-specific lipid-transfer protein 2 from Actinidia deliciosa (Kiwi).